A 314-amino-acid polypeptide reads, in one-letter code: DNA-directed RNA polymerase subunit alpha (314 aa).

Positions 1–228 (MIEIEKPRIE…EHLNIFVGLT (228 aa)) are alpha N-terminal domain (alpha-NTD). The interval 245 to 314 (KEKVLEMSIE…DLGLGLRKED (70 aa)) is alpha C-terminal domain (alpha-CTD).

It belongs to the RNA polymerase alpha chain family. As to quaternary structure, homodimer. The RNAP catalytic core consists of 2 alpha, 1 beta, 1 beta' and 1 omega subunit. When a sigma factor is associated with the core the holoenzyme is formed, which can initiate transcription.

The enzyme catalyses RNA(n) + a ribonucleoside 5'-triphosphate = RNA(n+1) + diphosphate. In terms of biological role, DNA-dependent RNA polymerase catalyzes the transcription of DNA into RNA using the four ribonucleoside triphosphates as substrates. The chain is DNA-directed RNA polymerase subunit alpha from Staphylococcus haemolyticus (strain JCSC1435).